The primary structure comprises 114 residues: Large ribosomal subunit protein bL20 (114 aa).

This sequence belongs to the bacterial ribosomal protein bL20 family.

Binds directly to 23S ribosomal RNA and is necessary for the in vitro assembly process of the 50S ribosomal subunit. It is not involved in the protein synthesizing functions of that subunit. The protein is Large ribosomal subunit protein bL20 of Amoebophilus asiaticus (strain 5a2).